The following is a 635-amino-acid chain: Threonine--tRNA ligase (635 aa).

The region spanning 1-61 (MISIRLKDGS…KEDGCLELLD (61 aa)) is the TGS domain. Positions 242-532 (DHRRLGRELG…LTEHFGGAFP (291 aa)) are catalytic. 3 residues coordinate Zn(2+): cysteine 333, histidine 384, and histidine 509.

The protein belongs to the class-II aminoacyl-tRNA synthetase family. In terms of assembly, homodimer. It depends on Zn(2+) as a cofactor.

It is found in the cytoplasm. It carries out the reaction tRNA(Thr) + L-threonine + ATP = L-threonyl-tRNA(Thr) + AMP + diphosphate + H(+). Its function is as follows. Catalyzes the attachment of threonine to tRNA(Thr) in a two-step reaction: L-threonine is first activated by ATP to form Thr-AMP and then transferred to the acceptor end of tRNA(Thr). Also edits incorrectly charged L-seryl-tRNA(Thr). The polypeptide is Threonine--tRNA ligase (Syntrophomonas wolfei subsp. wolfei (strain DSM 2245B / Goettingen)).